A 256-amino-acid polypeptide reads, in one-letter code: 1-(5-phosphoribosyl)-5-[(5-phosphoribosylamino)methylideneamino] imidazole-4-carboxamide isomerase (256 aa).

D8 acts as the Proton acceptor in catalysis. D130 (proton donor) is an active-site residue.

The protein belongs to the HisA/HisF family.

It localises to the cytoplasm. It carries out the reaction 1-(5-phospho-beta-D-ribosyl)-5-[(5-phospho-beta-D-ribosylamino)methylideneamino]imidazole-4-carboxamide = 5-[(5-phospho-1-deoxy-D-ribulos-1-ylimino)methylamino]-1-(5-phospho-beta-D-ribosyl)imidazole-4-carboxamide. It participates in amino-acid biosynthesis; L-histidine biosynthesis; L-histidine from 5-phospho-alpha-D-ribose 1-diphosphate: step 4/9. This is 1-(5-phosphoribosyl)-5-[(5-phosphoribosylamino)methylideneamino] imidazole-4-carboxamide isomerase from Chlorobium phaeovibrioides (strain DSM 265 / 1930) (Prosthecochloris vibrioformis (strain DSM 265)).